The chain runs to 311 residues: Homeobox-leucine zipper protein ATHB-6 (311 aa).

Residues 1–10 (MMKRLSSSDS) are compositionally biased toward polar residues. The interval 1 to 32 (MMKRLSSSDSVGGLISLCPTTSTDEQSPRRYG) is disordered. The interval 1–43 (MMKRLSSSDSVGGLISLCPTTSTDEQSPRRYGGREFQSMLEGY) is interaction with ABI1. The homeobox DNA-binding region spans 59 to 118 (LSEKKRRLSINQVKALEKNFELENKLEPERKVKLAQELGLQPRQVAVWFQNRRARWKTKQ). Positions 119 to 154 (LEKDYGVLKTQYDSLRHNFDSLRRDNESLLQEISKL) are leucine-zipper. Positions 157–183 (KLNGGGGEEEEEENNAAVTTESDISVK) are disordered. An interaction with ABI1 region spans residues 218–311 (LRDLLPLKAA…HWYSTVDHWN (94 aa)).

This sequence belongs to the HD-ZIP homeobox family. Class I subfamily. As to quaternary structure, interacts with ABI1. Phosphorylated by PKA. Reversible inactivation of the binding to DNA by phosphorylation. As to expression, widely expressed.

It localises to the nucleus. Functionally, transcription activator that may act as growth regulators in response to water deficit. Interacts with the core sequence 5'-CAATTATTA-3' of promoters in response to ABA and in an ABI1-dependent manner. Involved in the negative regulation of the ABA signaling pathway. In Arabidopsis thaliana (Mouse-ear cress), this protein is Homeobox-leucine zipper protein ATHB-6 (ATHB-6).